Here is a 451-residue protein sequence, read N- to C-terminus: MPREIITLQLGQCGNQIGFEFWKQLCAEHGISPEGIVEEFATEGTDRKDVFFYQADDEHYIPRAVLLDLEPRVIHSILNSPYAKLYNPENIYLSEHGGGAGNNWASGFSQGEKIHEDIFDIIDREADGSDSLEGFVLCHSIAGGTGSGLGSYLLERLNDRYPKKLVQTYSVFPYQDEMSDVVVQPYNSLLTLKRLTQNADCVVVLDNTALNRIATDRLHIQNPSFSQINQLVSTIMSASTTTLRYPGYMNNDLIGLIASLIPTPRLHFLMTGYTPLTTDQSVASVRKTTVLDVMRRLLQPKNVMVSTGRDRQTNHCYIAILNIIQGEVDPTQVHKSLQRIRERKLANFIPWGPASIQVALSRKSPYLPSAHRVSGLMMANHTSISSLFESSCQQFDKLRKRDAFLEQFRKEDMFKDNFDEMDRSREVVQELIDEYHAATQPDYISWGTQEQ.

Residue S131 is modified to Phosphoserine; by BRSK1. A142 to G148 provides a ligand contact to GTP.

The protein belongs to the tubulin family. As to quaternary structure, component of the gamma-tubulin ring complex (gTuRC) consisting of TUBGCP2, TUBGCP3, TUBGCP4, TUBGCP5 and TUBGCP6 and gamma-tubulin TUBG1 or TUBG2. TUBGCP2, TUBGCP3, TUBGCP4, TUBGCP5 and TUBGCP6 assemble in a 5:5:2:1:1 stoichiometry; each is associated with a gamma-tubulin, thereby arranging 14 gamma-tubulins in a helical manner. Gamma-tubulin at the first position is blocked by TUBGCP3 at the last position, allowing 13 protafilaments to grow into a microtubule. Interacts with alpha-beta tubulin heterodimers; the interaction allows microtubules to nucleate from the gTuRC. Phosphorylation at Ser-131 by BRSK1 regulates centrosome duplication, possibly by mediating relocation of gamma-tubulin and its associated proteins from the cytoplasm to the centrosome.

The protein resides in the cytoplasm. It is found in the cytoskeleton. It localises to the microtubule organizing center. Its subcellular location is the centrosome. In terms of biological role, tubulin is the major constituent of microtubules, protein filaments consisting of alpha- and beta-tubulin heterodimers. Gamma-tubulin is a key component of the gamma-tubulin ring complex (gTuRC) which mediates microtubule nucleation. The gTuRC regulates the minus-end nucleation of alpha-beta tubulin heterodimers that grow into microtubule protafilaments, a critical step in centrosome duplication and spindle formation. This is Tubulin gamma-2 chain (TUBG2) from Homo sapiens (Human).